The sequence spans 321 residues: Porphobilinogen deaminase (321 aa).

Cys246 is subject to S-(dipyrrolylmethanemethyl)cysteine.

Belongs to the HMBS family. As to quaternary structure, monomer. Dipyrromethane is required as a cofactor.

The catalysed reaction is 4 porphobilinogen + H2O = hydroxymethylbilane + 4 NH4(+). It functions in the pathway porphyrin-containing compound metabolism; protoporphyrin-IX biosynthesis; coproporphyrinogen-III from 5-aminolevulinate: step 2/4. Its function is as follows. Tetrapolymerization of the monopyrrole PBG into the hydroxymethylbilane pre-uroporphyrinogen in several discrete steps. The polypeptide is Porphobilinogen deaminase (Helicobacter hepaticus (strain ATCC 51449 / 3B1)).